A 479-amino-acid polypeptide reads, in one-letter code: Aspartyl/glutamyl-tRNA(Asn/Gln) amidotransferase subunit B (479 aa).

It belongs to the GatB/GatE family. GatB subfamily. Heterotrimer of A, B and C subunits.

The enzyme catalyses L-glutamyl-tRNA(Gln) + L-glutamine + ATP + H2O = L-glutaminyl-tRNA(Gln) + L-glutamate + ADP + phosphate + H(+). The catalysed reaction is L-aspartyl-tRNA(Asn) + L-glutamine + ATP + H2O = L-asparaginyl-tRNA(Asn) + L-glutamate + ADP + phosphate + 2 H(+). Functionally, allows the formation of correctly charged Asn-tRNA(Asn) or Gln-tRNA(Gln) through the transamidation of misacylated Asp-tRNA(Asn) or Glu-tRNA(Gln) in organisms which lack either or both of asparaginyl-tRNA or glutaminyl-tRNA synthetases. The reaction takes place in the presence of glutamine and ATP through an activated phospho-Asp-tRNA(Asn) or phospho-Glu-tRNA(Gln). The chain is Aspartyl/glutamyl-tRNA(Asn/Gln) amidotransferase subunit B from Streptococcus mutans serotype c (strain ATCC 700610 / UA159).